Consider the following 394-residue polypeptide: Elongation factor Tu (394 aa).

The tr-type G domain occupies 10-204; it reads KPHLNVGTIG…TLDTYIEDPV (195 aa). Positions 19 to 26 are G1; the sequence is GHVDHGKT. 19 to 26 is a GTP binding site; the sequence is GHVDHGKT. Threonine 26 is a Mg(2+) binding site. A G2 region spans residues 60 to 64; sequence GITIK. The G3 stretch occupies residues 81–84; sequence DCPG. GTP is bound by residues 81–85 and 136–139; these read DCPGH and NKCD. Residues 136–139 are G4; sequence NKCD. The tract at residues 174–176 is G5; the sequence is SAL.

The protein belongs to the TRAFAC class translation factor GTPase superfamily. Classic translation factor GTPase family. EF-Tu/EF-1A subfamily. Monomer.

Its subcellular location is the cytoplasm. It carries out the reaction GTP + H2O = GDP + phosphate + H(+). GTP hydrolase that promotes the GTP-dependent binding of aminoacyl-tRNA to the A-site of ribosomes during protein biosynthesis. This Onion yellows phytoplasma (strain OY-M) protein is Elongation factor Tu.